Reading from the N-terminus, the 429-residue chain is Histidinol dehydrogenase (429 aa).

NAD(+)-binding residues include Y130, Q191, and N214. Substrate contacts are provided by S237, Q259, and H262. The Zn(2+) site is built by Q259 and H262. Catalysis depends on proton acceptor residues E327 and H328. Substrate-binding residues include H328, D361, E415, and H420. D361 provides a ligand contact to Zn(2+). H420 lines the Zn(2+) pocket.

This sequence belongs to the histidinol dehydrogenase family. It depends on Zn(2+) as a cofactor.

It catalyses the reaction L-histidinol + 2 NAD(+) + H2O = L-histidine + 2 NADH + 3 H(+). It participates in amino-acid biosynthesis; L-histidine biosynthesis; L-histidine from 5-phospho-alpha-D-ribose 1-diphosphate: step 9/9. Catalyzes the sequential NAD-dependent oxidations of L-histidinol to L-histidinaldehyde and then to L-histidine. This chain is Histidinol dehydrogenase, found in Neisseria gonorrhoeae (strain ATCC 700825 / FA 1090).